The primary structure comprises 300 residues: Putative hydrolase ML2424 (300 aa).

Catalysis depends on Asp56, which acts as the Nucleophile. Positions 56, 58, and 231 each coordinate Mg(2+). The Proton donor role is filled by Asp58.

This sequence belongs to the HAD-like hydrolase superfamily. SerB family. Requires Mg(2+) as cofactor.

This chain is Putative hydrolase ML2424, found in Mycobacterium leprae (strain TN).